A 112-amino-acid chain; its full sequence is Large ribosomal subunit protein uL22 (112 aa).

Belongs to the universal ribosomal protein uL22 family. In terms of assembly, part of the 50S ribosomal subunit.

Its function is as follows. This protein binds specifically to 23S rRNA; its binding is stimulated by other ribosomal proteins, e.g. L4, L17, and L20. It is important during the early stages of 50S assembly. It makes multiple contacts with different domains of the 23S rRNA in the assembled 50S subunit and ribosome. In terms of biological role, the globular domain of the protein is located near the polypeptide exit tunnel on the outside of the subunit, while an extended beta-hairpin is found that lines the wall of the exit tunnel in the center of the 70S ribosome. The polypeptide is Large ribosomal subunit protein uL22 (Anaplasma phagocytophilum (strain HZ)).